The chain runs to 189 residues: ATP-dependent protease subunit HslV (189 aa).

Thr12 is an active-site residue. Na(+) is bound by residues Ser172, Cys175, and Thr178.

It belongs to the peptidase T1B family. HslV subfamily. A double ring-shaped homohexamer of HslV is capped on each side by a ring-shaped HslU homohexamer. The assembly of the HslU/HslV complex is dependent on binding of ATP.

Its subcellular location is the cytoplasm. It catalyses the reaction ATP-dependent cleavage of peptide bonds with broad specificity.. With respect to regulation, allosterically activated by HslU binding. Functionally, protease subunit of a proteasome-like degradation complex believed to be a general protein degrading machinery. In Ehrlichia chaffeensis (strain ATCC CRL-10679 / Arkansas), this protein is ATP-dependent protease subunit HslV.